Reading from the N-terminus, the 527-residue chain is DNA damage-binding protein cmr1 (527 aa).

The disordered stretch occupies residues 35–90 (AGLFPPKSARSSPGGLTKPKKKPAPKKVKKEDEDLVPRRMSSRLRGLAADSEVAKR). Residues 52 to 62 (KPKKKPAPKKV) show a composition bias toward basic residues. WD repeat units follow at residues 185–226 (LTPE…PISA), 249–289 (PHTR…SVEK), 296–336 (SDDI…RSAV), 341–381 (LSEK…HDEP), 388–427 (VSRLSVSHAAFNSAGQIATSSYDDTLKIYDFGSKGIAAWK), 450–493 (GRWV…LAQL), and 496–527 (DGITAVPAVAVFHRSTNWIAGGTASGKICLWM). The disordered stretch occupies residues 284-303 (TTSVEKYAPESTSDDIPISG).

It belongs to the WD repeat DDB2/WDR76 family.

DNA-binding protein that binds to both single- and double-stranded DNA. Binds preferentially to UV-damaged DNA. May be involved in DNA-metabolic processes. The protein is DNA damage-binding protein cmr1 of Neosartorya fischeri (strain ATCC 1020 / DSM 3700 / CBS 544.65 / FGSC A1164 / JCM 1740 / NRRL 181 / WB 181) (Aspergillus fischerianus).